The following is a 404-amino-acid chain: Cysteine desulfurase IscS (404 aa).

Residues 75–76, asparagine 155, glutamine 183, and 203–205 each bind pyridoxal 5'-phosphate; these read AT and SAH. Lysine 206 bears the N6-(pyridoxal phosphate)lysine mark. A pyridoxal 5'-phosphate-binding site is contributed by threonine 243. Cysteine 328 serves as the catalytic Cysteine persulfide intermediate. Position 328 (cysteine 328) interacts with [2Fe-2S] cluster.

This sequence belongs to the class-V pyridoxal-phosphate-dependent aminotransferase family. NifS/IscS subfamily. In terms of assembly, homodimer. Forms a heterotetramer with IscU, interacts with other sulfur acceptors. It depends on pyridoxal 5'-phosphate as a cofactor.

The protein resides in the cytoplasm. It catalyses the reaction (sulfur carrier)-H + L-cysteine = (sulfur carrier)-SH + L-alanine. It functions in the pathway cofactor biosynthesis; iron-sulfur cluster biosynthesis. In terms of biological role, master enzyme that delivers sulfur to a number of partners involved in Fe-S cluster assembly, tRNA modification or cofactor biosynthesis. Catalyzes the removal of elemental sulfur atoms from cysteine to produce alanine. Functions as a sulfur delivery protein for Fe-S cluster synthesis onto IscU, an Fe-S scaffold assembly protein, as well as other S acceptor proteins. The chain is Cysteine desulfurase IscS from Ectopseudomonas mendocina (strain ymp) (Pseudomonas mendocina).